The following is a 650-amino-acid chain: Chaperone protein HtpG (650 aa).

The tract at residues 1–356 (MSTRVETLEF…THDLSLNISR (356 aa)) is a; substrate-binding. The segment at 222 to 245 (AKDRDSNDDGTAESGAGAENAGDR) is disordered. Residues 357-572 (EILQQDRRIQ…TFDMTPALEK (216 aa)) form a b region. Residues 573-650 (MYRAMGHEMP…LLAERLAEAL (78 aa)) form a c region.

This sequence belongs to the heat shock protein 90 family. As to quaternary structure, homodimer.

The protein resides in the cytoplasm. Molecular chaperone. Has ATPase activity. The protein is Chaperone protein HtpG of Frankia casuarinae (strain DSM 45818 / CECT 9043 / HFP020203 / CcI3).